Consider the following 384-residue polypeptide: Zinc transporter 7 (384 aa).

The signal sequence occupies residues 1–25; that stretch reads MERFVQFLRRGNGLMAASLAAGSCA. Topologically, residues 26 to 46 are extracellular; that stretch reads EEVAKAEGAGCRDDAAALRLK. Residues 47 to 67 traverse the membrane as a helical segment; the sequence is GVAMATILVAGVVGVGLPLAG. Residues 68-79 are Cytoplasmic-facing; sequence RKRRALRTDSAA. Residues 80–100 traverse the membrane as a helical segment; it reads FVAAKAFAAGVILATGFVHML. The Extracellular portion of the chain corresponds to 101-119; sequence HDAEHALSSPCLPAHPWRS. The chain crosses the membrane as a helical span at residues 120–140; that stretch reads FPFPGFVAMSAALATLVLDFL. At 141–227 the chain is on the cytoplasmic side; it reads ATRFYEGKHR…GEGEVPAQVR (87 aa). The tract at residues 185 to 222 is disordered; sequence DNKAPLLQPHSHSHSHPHGHGHGHELAQPEGSGGEGEV. Basic residues predominate over residues 195–205; it reads SHSHSHPHGHG. The helical transmembrane segment at 228-248 threads the bilayer; it reads SVVVSQILEMGIVSHSVIIGL. Residues 249–261 lie on the Extracellular side of the membrane; the sequence is SLGVSRSPCTIRP. A helical membrane pass occupies residues 262 to 282; the sequence is LVAALSFHQFFEGFALGGCIA. The Cytoplasmic segment spans residues 283-291; that stretch reads QAQFKTLSA. A helical transmembrane segment spans residues 292–312; sequence AIMACFFAITTPAGIAAGAGV. At 313-323 the chain is on the extracellular side; it reads ASFYNANSPRA. A helical membrane pass occupies residues 324 to 344; it reads LVVEGILDSVSAGILIYMSLV. Over 345–363 the chain is Cytoplasmic; sequence DLIAADFLGGKMTGSTRQQ. Residues 364–384 form a helical membrane-spanning segment; that stretch reads VMAYIALFLGALSMSSLAIWA.

This sequence belongs to the ZIP transporter (TC 2.A.5) family.

The protein localises to the cell membrane. Functionally, zinc transporter that may be involved in zinc uptake from the rhizosphere. This is Zinc transporter 7 (ZIP7) from Oryza sativa subsp. japonica (Rice).